The sequence spans 269 residues: 5'-nucleotidase SurE (269 aa).

A divalent metal cation contacts are provided by D11, D12, S43, and N101.

Belongs to the SurE nucleotidase family. A divalent metal cation serves as cofactor.

The protein localises to the cytoplasm. It catalyses the reaction a ribonucleoside 5'-phosphate + H2O = a ribonucleoside + phosphate. Nucleotidase that shows phosphatase activity on nucleoside 5'-monophosphates. The protein is 5'-nucleotidase SurE of Prochlorococcus marinus (strain MIT 9303).